The sequence spans 328 residues: tRNA uridine(34) hydroxylase (328 aa).

One can recognise a Rhodanese domain in the interval Leu-130–Glu-224. The Cysteine persulfide intermediate role is filled by Cys-184.

The protein belongs to the TrhO family.

It catalyses the reaction uridine(34) in tRNA + AH2 + O2 = 5-hydroxyuridine(34) in tRNA + A + H2O. Catalyzes oxygen-dependent 5-hydroxyuridine (ho5U) modification at position 34 in tRNAs. This is tRNA uridine(34) hydroxylase from Streptococcus pneumoniae (strain Taiwan19F-14).